The chain runs to 132 residues: Small ribosomal subunit protein eS6 (132 aa).

Belongs to the eukaryotic ribosomal protein eS6 family.

This Methanoculleus marisnigri (strain ATCC 35101 / DSM 1498 / JR1) protein is Small ribosomal subunit protein eS6.